The primary structure comprises 199 residues: N-(5'-phosphoribosyl)anthranilate isomerase (199 aa).

Belongs to the TrpF family.

The catalysed reaction is N-(5-phospho-beta-D-ribosyl)anthranilate = 1-(2-carboxyphenylamino)-1-deoxy-D-ribulose 5-phosphate. The protein operates within amino-acid biosynthesis; L-tryptophan biosynthesis; L-tryptophan from chorismate: step 3/5. This is N-(5'-phosphoribosyl)anthranilate isomerase from Campylobacter jejuni subsp. jejuni serotype O:6 (strain 81116 / NCTC 11828).